We begin with the raw amino-acid sequence, 815 residues long: Translation initiation factor IF-2 (815 aa).

The span at 153–176 (VQEKEAEKKVEKLKTADKPKEGNK) shows a compositional bias: basic and acidic residues. A disordered region spans residues 153 to 219 (VQEKEAEKKV…THLSQKIQAE (67 aa)). Over residues 191–209 (KQLHVARHNPNRRLKKKDR) the composition is skewed to basic residues. Positions 315–482 (ARPPIVTIMG…AISLTAEILE (168 aa)) constitute a tr-type G domain. Residues 324 to 331 (GHVDHGKT) form a G1 region. GTP is bound at residue 324 to 331 (GHVDHGKT). The interval 349 to 353 (GITQH) is G2. Positions 370-373 (DTPG) are G3. Residues 370–374 (DTPGH) and 424–427 (NKID) contribute to the GTP site. Positions 424–427 (NKID) are G4. The G5 stretch occupies residues 460–462 (SAH).

Belongs to the TRAFAC class translation factor GTPase superfamily. Classic translation factor GTPase family. IF-2 subfamily.

It is found in the cytoplasm. Its function is as follows. One of the essential components for the initiation of protein synthesis. Protects formylmethionyl-tRNA from spontaneous hydrolysis and promotes its binding to the 30S ribosomal subunits. Also involved in the hydrolysis of GTP during the formation of the 70S ribosomal complex. This chain is Translation initiation factor IF-2, found in Vesicomyosocius okutanii subsp. Calyptogena okutanii (strain HA).